A 284-amino-acid polypeptide reads, in one-letter code: Homeobox protein Hox-D13 (284 aa).

Positions 217 to 276 (GRKKRVPYTKTQLKELEREYATNKFITKEKRRRISTATNLTERQVTIWFQNRRVKEKKVV) form a DNA-binding region, homeobox.

It belongs to the Abd-B homeobox family.

The protein localises to the nucleus. Functionally, sequence-specific transcription factor that binds gene promoters and activates their transcription. Part of a developmental regulatory system that provides cells with specific positional identities on the anterior-posterior axis. This is Homeobox protein Hox-D13 (HOXD13) from Heterodontus francisci (Horn shark).